We begin with the raw amino-acid sequence, 1675 residues long: Coadhesin (1675 aa).

Topologically, residues 1–1356 (QGNYYSYGGT…TIADQADAAK (1356 aa)) are extracellular. Residues 11 to 160 (TPGTPIGCTN…ICMRVGVESC (150 aa)) enclose the F5/8 type C 1 domain. TSP type-1 domains lie at 168–220 (NGAW…NDCV), 224–279 (NGGW…QFCP), 281–336 (DGGW…QCCP), 338–393 (HGGW…QTCP), 403–458 (NGNY…IPCP), 460–515 (NGNW…TACP), and 517–572 (DGGW…GPCP). Intrachain disulfides connect Cys-180/Cys-216, Cys-184/Cys-219, Cys-194/Cys-206, Cys-236/Cys-273, Cys-240/Cys-278, Cys-251/Cys-263, Cys-293/Cys-330, Cys-297/Cys-335, Cys-308/Cys-320, Cys-350/Cys-387, Cys-354/Cys-392, Cys-365/Cys-377, Cys-415/Cys-452, Cys-419/Cys-457, Cys-430/Cys-442, Cys-472/Cys-509, Cys-476/Cys-514, Cys-487/Cys-499, Cys-528/Cys-566, Cys-532/Cys-571, and Cys-543/Cys-555. The segment at 567 to 588 (NKGPCPTSPPTISPPTTGSPAD) is disordered. VWFA domains follow at residues 595–769 (DLVF…MDRI), 778–958 (DIGF…FKAL), and 966–1141 (DLTF…ISII). The 55-residue stretch at 1144–1198 (PSGLSKWSSWSACSKTCRYLGKAGTQIRTRDCKIPELGCDGMRIDTVECNKMDCE) folds into the TSP type-1 8 domain. Disulfide bonds link Cys-1156–Cys-1192, Cys-1160–Cys-1197, and Cys-1175–Cys-1182. Residues 1192-1336 (CNKMDCEGCG…PCMQAAVFGC (145 aa)) form the F5/8 type C 2 domain. The chain crosses the membrane as a helical span at residues 1357 to 1377 (GILIVLWILAGILTFLLLMAC). Over 1378–1675 (CYYCCWHVCC…RGEEWYSRWG (298 aa)) the chain is Cytoplasmic. Basic and acidic residues predominate over residues 1463-1480 (EKHVTAEDVKSEKPKYSE). The segment at 1463–1491 (EKHVTAEDVKSEKPKYSEEASSGTIKSGS) is disordered. Polar residues predominate over residues 1481–1491 (EASSGTIKSGS).

Component of the acid-insoluble and acid-soluble organic matrix of the aragonitic skeleton (at protein level).

It localises to the membrane. The protein is Coadhesin of Acropora millepora (Staghorn coral).